The chain runs to 425 residues: UPF0761 membrane protein XC_3370 (425 aa).

The next 6 membrane-spanning stretches (helical) occupy residues 48-68 (VFAL…FPAF), 105-125 (FTVA…HSIE), 154-174 (GTML…LPLF), 182-202 (LAEF…IVLI), 216-236 (ALPG…GFGF), and 250-270 (ALSA…SVLL).

This sequence belongs to the UPF0761 family.

It localises to the cell inner membrane. This is UPF0761 membrane protein XC_3370 from Xanthomonas campestris pv. campestris (strain 8004).